The sequence spans 553 residues: Glycerol kinase 2 (553 aa).

Residue threonine 20 participates in substrate binding. Position 24 (arginine 24) interacts with ATP. Substrate contacts are provided by arginine 94, tyrosine 148, and aspartate 259. Residues threonine 281, glycine 326, and 427–431 (GMTNN) each bind ATP. A helical membrane pass occupies residues 526–546 (IFSSLPLGFFIVSSMVMLIGA).

The protein belongs to the FGGY kinase family. In terms of assembly, interacts with ARMC12. Interacts with PLD6. Testis-specific. Expressed in the midpiece of spermatozoa.

It localises to the mitochondrion outer membrane. It is found in the cytoplasm. The catalysed reaction is glycerol + ATP = sn-glycerol 3-phosphate + ADP + H(+). The protein operates within polyol metabolism; glycerol degradation via glycerol kinase pathway; sn-glycerol 3-phosphate from glycerol: step 1/1. In terms of biological role, key enzyme in the regulation of glycerol uptake and metabolism. Essential for male fertility and sperm mitochondrial sheath formation. Required for proper arrangement of crescent-like mitochondria to form the mitochondrial sheath during spermatogenesis. Can induce mitochondrial clustering through interactions with PLD6 and up-regulation of phosphatidic acid synthesis in the mitochondria. This is Glycerol kinase 2 (GK2) from Homo sapiens (Human).